Consider the following 182-residue polypeptide: UPF0316 protein BCAH820_3389 (182 aa).

Transmembrane regions (helical) follow at residues 6 to 26 (LIFVLQIIYVPILTIRTILLV), 32 to 52 (SAAAVGLLEGAIYIVSLGIVF), and 58 to 78 (WMNIVAYVIGFSAGLLLGGYI).

This sequence belongs to the UPF0316 family.

It localises to the cell membrane. The protein is UPF0316 protein BCAH820_3389 of Bacillus cereus (strain AH820).